A 297-amino-acid chain; its full sequence is uncharacterized protein (297 aa).

In terms of domain architecture, HTH lysR-type spans 1–60 (MNIELRHLRYFVAVAEELHFGRAAARLNISQPPLSQQIQALEQQIGARLLARTNRSVLLT). A DNA-binding region (H-T-H motif) is located at residues 20–40 (FGRAAARLNISQPPLSQQIQA).

It belongs to the LysR transcriptional regulatory family.

This is an uncharacterized protein from Escherichia coli (strain K12).